We begin with the raw amino-acid sequence, 298 residues long: Small ribosomal subunit biogenesis GTPase RsgA (298 aa).

Residues 67-228 (TNELVRPPIS…IADTPGFSSL (162 aa)) enclose the CP-type G domain. Residues 116-119 (TKMD) and 171-179 (GQSGVGKSS) contribute to the GTP site. Residues C252, C257, H259, and C265 each coordinate Zn(2+).

Belongs to the TRAFAC class YlqF/YawG GTPase family. RsgA subfamily. Monomer. Associates with 30S ribosomal subunit, binds 16S rRNA. It depends on Zn(2+) as a cofactor.

It is found in the cytoplasm. In terms of biological role, one of several proteins that assist in the late maturation steps of the functional core of the 30S ribosomal subunit. Helps release RbfA from mature subunits. May play a role in the assembly of ribosomal proteins into the subunit. Circularly permuted GTPase that catalyzes slow GTP hydrolysis, GTPase activity is stimulated by the 30S ribosomal subunit. This chain is Small ribosomal subunit biogenesis GTPase RsgA, found in Bacillus pumilus (strain SAFR-032).